A 146-amino-acid polypeptide reads, in one-letter code: Universal stress protein MT1672 (146 aa).

Belongs to the universal stress protein A family.

In Mycobacterium tuberculosis (strain CDC 1551 / Oshkosh), this protein is Universal stress protein MT1672.